Reading from the N-terminus, the 159-residue chain is Bacterioferritin (159 aa).

The Ferritin-like diiron domain maps to 1 to 145; that stretch reads MQGDPEVLRL…TQLELMDKLG (145 aa). Fe cation is bound by residues Glu-18 and Glu-51. Met-52 contributes to the heme b binding site. Fe cation-binding residues include His-54, Glu-94, Glu-127, and His-130.

This sequence belongs to the bacterioferritin family. As to quaternary structure, homooligomer of 24 subunits, arranged as 12 dimers, that are packed together to form an approximately spherical molecule with a central cavity, in which large amounts of iron can be deposited. The cofactor is heme b.

It catalyses the reaction 4 Fe(2+) + O2 + 4 H(+) = 4 Fe(3+) + 2 H2O. The catalysed reaction is Fe(2+)(in) = Fe(2+)(out). Iron-storage protein, whose ferroxidase center binds Fe(2+), oxidizes it using dioxygen to Fe(3+), and participates in the subsequent Fe(3+) oxide mineral core formation within the central cavity of the BFR protein shell. This Mycolicibacterium paratuberculosis (strain ATCC BAA-968 / K-10) (Mycobacterium paratuberculosis) protein is Bacterioferritin (bfr).